Consider the following 437-residue polypeptide: Xylose isomerase (437 aa).

Catalysis depends on residues H101 and D104. Residues E232, E268, H271, D296, D307, D309, and D339 each contribute to the Mg(2+) site.

It belongs to the xylose isomerase family. In terms of assembly, homotetramer. Mg(2+) serves as cofactor.

The protein localises to the cytoplasm. The enzyme catalyses alpha-D-xylose = alpha-D-xylulofuranose. The polypeptide is Xylose isomerase (Actinobacillus succinogenes (strain ATCC 55618 / DSM 22257 / CCUG 43843 / 130Z)).